We begin with the raw amino-acid sequence, 364 residues long: Carbamoyl phosphate synthase pyrimidine-specific small chain (364 aa).

The CPSase stretch occupies residues Met1–Asn169. L-glutamine contacts are provided by Ser45, Gly217, and Gly219. The 188-residue stretch at Asn169 to Thr356 folds into the Glutamine amidotransferase type-1 domain. The active-site Nucleophile is Cys244. The L-glutamine site is built by Leu245, Gln248, Asn286, Gly288, and Tyr289. Residues His329 and Asp331 contribute to the active site.

Belongs to the CarA family. Composed of two chains; the small (or glutamine) chain promotes the hydrolysis of glutamine to ammonia, which is used by the large (or ammonia) chain to synthesize carbamoyl phosphate. Tetramer of heterodimers (alpha,beta)4.

The enzyme catalyses hydrogencarbonate + L-glutamine + 2 ATP + H2O = carbamoyl phosphate + L-glutamate + 2 ADP + phosphate + 2 H(+). It carries out the reaction L-glutamine + H2O = L-glutamate + NH4(+). It participates in pyrimidine metabolism; UMP biosynthesis via de novo pathway; (S)-dihydroorotate from bicarbonate: step 1/3. Inhibited by pyrimidine. Small subunit of the glutamine-dependent carbamoyl phosphate synthetase (CPSase). CPSase catalyzes the formation of carbamoyl phosphate from the ammonia moiety of glutamine, carbonate, and phosphate donated by ATP, constituting the first step of the biosynthetic pathway leading to pyrimidine nucleotides. The small subunit (glutamine amidotransferase) binds and cleaves glutamine to supply the large subunit with the substrate ammonia. This Lactiplantibacillus plantarum (strain ATCC BAA-793 / NCIMB 8826 / WCFS1) (Lactobacillus plantarum) protein is Carbamoyl phosphate synthase pyrimidine-specific small chain.